A 102-amino-acid polypeptide reads, in one-letter code: Large ribosomal subunit protein bL21 (102 aa).

This sequence belongs to the bacterial ribosomal protein bL21 family. As to quaternary structure, part of the 50S ribosomal subunit. Contacts protein L20.

In terms of biological role, this protein binds to 23S rRNA in the presence of protein L20. This Lachnospira eligens (strain ATCC 27750 / DSM 3376 / VPI C15-48 / C15-B4) (Eubacterium eligens) protein is Large ribosomal subunit protein bL21.